The sequence spans 190 residues: GTP cyclohydrolase 1 (190 aa).

Zn(2+) is bound by residues cysteine 75, histidine 78, and cysteine 146.

The protein belongs to the GTP cyclohydrolase I family. Toroid-shaped homodecamer, composed of two pentamers of five dimers.

The catalysed reaction is GTP + H2O = 7,8-dihydroneopterin 3'-triphosphate + formate + H(+). Its pathway is cofactor biosynthesis; 7,8-dihydroneopterin triphosphate biosynthesis; 7,8-dihydroneopterin triphosphate from GTP: step 1/1. In Campylobacter jejuni subsp. doylei (strain ATCC BAA-1458 / RM4099 / 269.97), this protein is GTP cyclohydrolase 1.